The chain runs to 420 residues: MSSSPTVLELFDVCFKQEDVDSLKKPNWFTDVSIDYVDELIEHLWFPSYPNQANEILLLRPSLVFLLAEAAISPEELKVALPKKLMNCKYLFMPINDLDKHAAGSGGSHWSLMVASIPDGQCYYYDSLSNGKTKDCRSALARVSDLFKKKFTIECMPVQQQRNGYDCGAHVCAFTLELVRRLLHSPMPTSSMWNLSTFQPDVTAIREQLSRCLDHIINSLGTRVSGDFDEDFPTGTVFFDLESHLPLLDVALPVLPKSSDSSETSHESSNSNLKKSSESGSTNHHNNHESDKDLHHEGHHHHHHHHHHHHSHDDDPSSPAEKKQNHVPSPSEKIQDHVPSPSEKKQDRVPSPSNNKEDHLPLLSDEKLDKSAIDKIEPTPLPSVHMNSHIAKGELPKFHNSTDNPFLTPPEELVSGDFPF.

Low complexity predominate over residues 257 to 281 (KSSDSSETSHESSNSNLKKSSESGS). Residues 257 to 420 (KSSDSSETSH…EELVSGDFPF (164 aa)) form a disordered region. Residues 286 to 296 (NNHESDKDLHH) are compositionally biased toward basic and acidic residues. Residues 297 to 310 (EGHHHHHHHHHHHH) show a composition bias toward basic residues. Residues 311-324 (SHDDDPSSPAEKKQ) are compositionally biased toward basic and acidic residues. Ser329, Ser340, and Ser351 each carry phosphoserine. The span at 355 to 377 (NKEDHLPLLSDEKLDKSAIDKIE) shows a compositional bias: basic and acidic residues.

The protein belongs to the peptidase C48 family. In terms of assembly, interacts with csn1. It is, however, not a component of the signalosome.

It is found in the cytoplasm. In terms of biological role, protease that catalyzes two essential functions in the NEDD8 pathway: processing of full-length NEDD8 to its mature form and deconjugation of NEDD8 from targeted proteins such as the pcu1, pcu2 and pcu4 cullins and other proteins. This Schizosaccharomyces pombe (strain 972 / ATCC 24843) (Fission yeast) protein is NEDD8-specific protease 1 (nep1).